Here is a 200-residue protein sequence, read N- to C-terminus: Small ribosomal subunit protein mS26 (200 aa).

A mitochondrion-targeting transit peptide spans 1-27; the sequence is MLRALNRLAARPETRPPTPLLLPVRGR. The disordered stretch occupies residues 1 to 44; sequence MLRALNRLAARPETRPPTPLLLPVRGRKTRHDPPAKSKVGRVQT. K159 is modified (N6-acetyllysine).

It belongs to the mitochondrion-specific ribosomal protein mS26 family. In terms of assembly, component of the mitochondrial ribosome small subunit (28S) which comprises a 12S rRNA and about 30 distinct proteins.

It localises to the mitochondrion. The polypeptide is Small ribosomal subunit protein mS26 (Mrps26) (Mus musculus (Mouse)).